Reading from the N-terminus, the 372-residue chain is 4-hydroxy-3-methylbut-2-en-1-yl diphosphate synthase (flavodoxin) (372 aa).

Residues C270, C273, C305, and E312 each contribute to the [4Fe-4S] cluster site.

It belongs to the IspG family. The cofactor is [4Fe-4S] cluster.

The catalysed reaction is (2E)-4-hydroxy-3-methylbut-2-enyl diphosphate + oxidized [flavodoxin] + H2O + 2 H(+) = 2-C-methyl-D-erythritol 2,4-cyclic diphosphate + reduced [flavodoxin]. It functions in the pathway isoprenoid biosynthesis; isopentenyl diphosphate biosynthesis via DXP pathway; isopentenyl diphosphate from 1-deoxy-D-xylulose 5-phosphate: step 5/6. Its function is as follows. Converts 2C-methyl-D-erythritol 2,4-cyclodiphosphate (ME-2,4cPP) into 1-hydroxy-2-methyl-2-(E)-butenyl 4-diphosphate. The polypeptide is 4-hydroxy-3-methylbut-2-en-1-yl diphosphate synthase (flavodoxin) (Shigella dysenteriae serotype 1 (strain Sd197)).